The chain runs to 310 residues: uncharacterized protein (310 aa).

This is an uncharacterized protein from Archaeoglobus fulgidus (strain ATCC 49558 / DSM 4304 / JCM 9628 / NBRC 100126 / VC-16).